The primary structure comprises 258 residues: Imidazole glycerol phosphate synthase subunit HisF (258 aa).

Residues aspartate 12 and aspartate 131 contribute to the active site.

The protein belongs to the HisA/HisF family. Heterodimer of HisH and HisF.

It is found in the cytoplasm. It catalyses the reaction 5-[(5-phospho-1-deoxy-D-ribulos-1-ylimino)methylamino]-1-(5-phospho-beta-D-ribosyl)imidazole-4-carboxamide + L-glutamine = D-erythro-1-(imidazol-4-yl)glycerol 3-phosphate + 5-amino-1-(5-phospho-beta-D-ribosyl)imidazole-4-carboxamide + L-glutamate + H(+). Its pathway is amino-acid biosynthesis; L-histidine biosynthesis; L-histidine from 5-phospho-alpha-D-ribose 1-diphosphate: step 5/9. In terms of biological role, IGPS catalyzes the conversion of PRFAR and glutamine to IGP, AICAR and glutamate. The HisF subunit catalyzes the cyclization activity that produces IGP and AICAR from PRFAR using the ammonia provided by the HisH subunit. This is Imidazole glycerol phosphate synthase subunit HisF from Corynebacterium glutamicum (strain R).